The following is a 543-amino-acid chain: Thiamine transport system permease protein ThiP (543 aa).

12 consecutive transmembrane segments (helical) span residues 19–39 (VAGGLALAFLATLAGGALLAL), 64–84 (FTIWQAVASSLLSVLFAIPIA), 102–122 (LFALPLALPALVAVLGVTSIY), 142–162 (DIYGIAGILIAHIFFNMPLAV), 205–225 (GMIGLVFMLCVTSFTTVLTLG), 250–270 (AVALTFTQLALTLLILLILRL), 300–320 (IIVIALGFLYVALPIAGVVVS), 343–363 (LALGFSAALLAVFLSLALVAA), 379–399 (GASLILVMPPIVIGAGWFILL), 406–426 (FVMAPLMVVTVNAAMAMPFAV), 468–488 (GMAFAFAMALSLGDLGTIALF), and 510–530 (FDAAGLALILGVLCLALMMIA). One can recognise an ABC transmembrane type-1 1 domain in the interval 62–266 (ARFTIWQAVA…QLALTLLILL (205 aa)). The 192-residue stretch at 339-530 (IATSLALGFS…VLCLALMMIA (192 aa)) folds into the ABC transmembrane type-1 2 domain.

The protein belongs to the binding-protein-dependent transport system permease family. CysTW subfamily. As to quaternary structure, the complex is composed of two ATP-binding proteins (ThiQ), two transmembrane proteins (ThiP) and a solute-binding protein (ThiB).

The protein resides in the cell inner membrane. Functionally, part of the ABC transporter complex ThiBPQ involved in thiamine import. Probably responsible for the translocation of the substrate across the membrane. In Brucella abortus (strain 2308), this protein is Thiamine transport system permease protein ThiP (thiP).